We begin with the raw amino-acid sequence, 141 residues long: Nucleoside diphosphate kinase (141 aa).

The ATP site is built by lysine 11, phenylalanine 59, arginine 87, threonine 93, arginine 104, and asparagine 114. The active-site Pros-phosphohistidine intermediate is histidine 117.

The protein belongs to the NDK family. As to quaternary structure, homotetramer. The cofactor is Mg(2+).

Its subcellular location is the cytoplasm. The catalysed reaction is a 2'-deoxyribonucleoside 5'-diphosphate + ATP = a 2'-deoxyribonucleoside 5'-triphosphate + ADP. The enzyme catalyses a ribonucleoside 5'-diphosphate + ATP = a ribonucleoside 5'-triphosphate + ADP. Its function is as follows. Major role in the synthesis of nucleoside triphosphates other than ATP. The ATP gamma phosphate is transferred to the NDP beta phosphate via a ping-pong mechanism, using a phosphorylated active-site intermediate. The protein is Nucleoside diphosphate kinase of Serratia proteamaculans (strain 568).